We begin with the raw amino-acid sequence, 33 residues long: Dermaseptin-H9 (33 aa).

Leucine 33 is subject to Leucine amide.

The protein belongs to the frog skin active peptide (FSAP) family. Dermaseptin subfamily. As to expression, expressed by the skin glands.

Its subcellular location is the secreted. Functionally, has antimicrobial activity. The protein is Dermaseptin-H9 of Pithecopus hypochondrialis (Orange-legged leaf frog).